Consider the following 209-residue polypeptide: Small ribosomal subunit protein uS4 (209 aa).

Residues 99–164 (TRLDNVVYRM…IPRVQELKEL (66 aa)) form the S4 RNA-binding domain.

Belongs to the universal ribosomal protein uS4 family. In terms of assembly, part of the 30S ribosomal subunit. Contacts protein S5. The interaction surface between S4 and S5 is involved in control of translational fidelity.

Its function is as follows. One of the primary rRNA binding proteins, it binds directly to 16S rRNA where it nucleates assembly of the body of the 30S subunit. Functionally, with S5 and S12 plays an important role in translational accuracy. In Natranaerobius thermophilus (strain ATCC BAA-1301 / DSM 18059 / JW/NM-WN-LF), this protein is Small ribosomal subunit protein uS4.